Here is a 612-residue protein sequence, read N- to C-terminus: UvrABC system protein C (612 aa).

Residues 20 to 98 form the GIY-YIG domain; that stretch reads THSGVYRMLD…IKQHRPKYNI (79 aa). One can recognise a UVR domain in the interval 208 to 243; sequence SSVLEEISAKMYQASEDMEYEKAQVYRDQLVVLRKL.

It belongs to the UvrC family. Interacts with UvrB in an incision complex.

It is found in the cytoplasm. In terms of biological role, the UvrABC repair system catalyzes the recognition and processing of DNA lesions. UvrC both incises the 5' and 3' sides of the lesion. The N-terminal half is responsible for the 3' incision and the C-terminal half is responsible for the 5' incision. This is UvrABC system protein C from Francisella tularensis subsp. holarctica (strain FTNF002-00 / FTA).